Consider the following 313-residue polypeptide: Olfactory receptor 5H15 (313 aa).

The Extracellular segment spans residues 1–28; sequence MEEENATLLTEFVLTGFLYQPQWKIPLF. Residue N5 is glycosylated (N-linked (GlcNAc...) asparagine). The helical transmembrane segment at 29 to 49 threads the bilayer; sequence LAFLVIYLITIMGNLGLIAVI. Residues 50-56 lie on the Cytoplasmic side of the membrane; that stretch reads WKDPHLH. A helical membrane pass occupies residues 57-77; the sequence is IPMYLLLGNLAFVDAWISSTV. Over 78–98 the chain is Extracellular; it reads TPKMLNNFLAKSKMISLSECK. C97 and C179 form a disulfide bridge. The helical transmembrane segment at 99 to 119 threads the bilayer; sequence IQFFSIAIGVTTECFLLATMA. The Cytoplasmic segment spans residues 120 to 143; sequence YDRYVAICKPLLYPAIMTNGLCIR. The chain crosses the membrane as a helical span at residues 144–164; the sequence is LLILSYIAGILHALIHEGFLF. Residues 165–195 are Extracellular-facing; the sequence is RLTFCNSNIVHHIYCDTIPLSKISCTDSSIN. A helical membrane pass occupies residues 196-216; that stretch reads FLMVFIFSGSIQVFSIVTILI. Residues 217–240 are Cytoplasmic-facing; sequence SYTFVLFTVLEKKSDKGVRKAFST. The helical transmembrane segment at 241–261 threads the bilayer; it reads CGAHLFSVCLYYGPLLLMYVG. Residues 262–271 are Extracellular-facing; it reads PASPQADGQN. Residues 272–292 traverse the membrane as a helical segment; the sequence is MVEPLFYTVIIPLLNPIIYSL. Over 293–313 the chain is Cytoplasmic; sequence RNKQVIVSFIKMLKRNVKVSY.

It belongs to the G-protein coupled receptor 1 family.

It is found in the cell membrane. In terms of biological role, odorant receptor. The protein is Olfactory receptor 5H15 (OR5H15) of Homo sapiens (Human).